A 347-amino-acid polypeptide reads, in one-letter code: NADH-ubiquinone oxidoreductase chain 2 (347 aa).

9 consecutive transmembrane segments (helical) span residues 5–22 (ILAI…MVLI), 26–45 (WLTI…PILM), 60–80 (FLTQ…NLLL), 150–170 (NPNL…WGGL), 178–198 (ILAY…TYNP), 200–220 (LMLL…MLFM), 237–257 (LPLI…LPPL), 274–294 (DMAI…YFYM), and 327–347 (PPLI…LTLF).

Belongs to the complex I subunit 2 family. As to quaternary structure, core subunit of respiratory chain NADH dehydrogenase (Complex I) which is composed of 45 different subunits. Interacts with TMEM242.

Its subcellular location is the mitochondrion inner membrane. It carries out the reaction a ubiquinone + NADH + 5 H(+)(in) = a ubiquinol + NAD(+) + 4 H(+)(out). Its function is as follows. Core subunit of the mitochondrial membrane respiratory chain NADH dehydrogenase (Complex I) which catalyzes electron transfer from NADH through the respiratory chain, using ubiquinone as an electron acceptor. Essential for the catalytic activity and assembly of complex I. The polypeptide is NADH-ubiquinone oxidoreductase chain 2 (Martes zibellina (Sable)).